We begin with the raw amino-acid sequence, 240 residues long: (DL)-glycerol-3-phosphatase 2 (240 aa).

D20 acts as the Nucleophile in catalysis. Mg(2+) is bound by residues D20, D22, and D185. D22 (proton donor) is an active-site residue.

The protein belongs to the HAD-like hydrolase superfamily. DOG/GPP family. It depends on Mg(2+) as a cofactor. As to expression, ubiquitous with highest expression in siliques. Mainly restricted to the meristem of immature flower and vascular elements of the root, shoot, leave, siliqua and developing embryo (at the protein level).

The protein localises to the cytoplasm. It carries out the reaction sn-glycerol 1-phosphate + H2O = glycerol + phosphate. It catalyses the reaction sn-glycerol 3-phosphate + H2O = glycerol + phosphate. In terms of biological role, acts as a glycerol-3-phosphatase with higher stereospecificity for L-glycerol-3-phosphate than DL-glycerol-3-phosphate. This Arabidopsis thaliana (Mouse-ear cress) protein is (DL)-glycerol-3-phosphatase 2 (GPP2).